The sequence spans 659 residues: Threonine--tRNA ligase (659 aa).

The 64-residue stretch at 7–70 folds into the TGS domain; sequence DSELIKLTLP…QQDGAIEIVT (64 aa). Residues 253 to 555 are catalytic; that stretch reads DHRKLGSELE…LIENFAGNFP (303 aa). Zn(2+) is bound by residues cysteine 351, histidine 402, and histidine 532.

Belongs to the class-II aminoacyl-tRNA synthetase family. As to quaternary structure, homodimer. Requires Zn(2+) as cofactor.

The protein localises to the cytoplasm. The catalysed reaction is tRNA(Thr) + L-threonine + ATP = L-threonyl-tRNA(Thr) + AMP + diphosphate + H(+). Catalyzes the attachment of threonine to tRNA(Thr) in a two-step reaction: L-threonine is first activated by ATP to form Thr-AMP and then transferred to the acceptor end of tRNA(Thr). Also edits incorrectly charged L-seryl-tRNA(Thr). The chain is Threonine--tRNA ligase from Chloroherpeton thalassium (strain ATCC 35110 / GB-78).